Reading from the N-terminus, the 92-residue chain is DNA-directed RNA polymerase subunit omega (92 aa).

The protein belongs to the RNA polymerase subunit omega family. As to quaternary structure, the RNAP catalytic core consists of 2 alpha, 1 beta, 1 beta' and 1 omega subunit. When a sigma factor is associated with the core the holoenzyme is formed, which can initiate transcription.

It carries out the reaction RNA(n) + a ribonucleoside 5'-triphosphate = RNA(n+1) + diphosphate. Promotes RNA polymerase assembly. Latches the N- and C-terminal regions of the beta' subunit thereby facilitating its interaction with the beta and alpha subunits. This Corynebacterium diphtheriae (strain ATCC 700971 / NCTC 13129 / Biotype gravis) protein is DNA-directed RNA polymerase subunit omega.